Reading from the N-terminus, the 501-residue chain is Prostacyclin synthase (501 aa).

A helical transmembrane segment spans residues 1–21 (MSWAALLGLLAVLLLLLLLLS). Residues arginine 107, leucine 113, asparagine 288, 359–360 (TR), and arginine 383 contribute to the substrate site. Heme is bound at residue cysteine 442.

It belongs to the cytochrome P450 family. Heme is required as a cofactor.

The protein resides in the endoplasmic reticulum membrane. It carries out the reaction prostaglandin H2 = prostaglandin I2. The enzyme catalyses a hydroperoxyeicosatetraenoate = an oxoeicosatetraenoate + H2O. It catalyses the reaction (15S)-hydroperoxy-(5Z,8Z,11Z,13E)-eicosatetraenoate = 15-oxo-(5Z,8Z,11Z,13E)-eicosatetraenoate + H2O. The catalysed reaction is (15S)-hydroperoxy-(5Z,8Z,11Z,13E)-eicosatetraenoate + AH2 = (15S)-hydroxy-(5Z,8Z,11Z,13E)-eicosatetraenoate + A + H2O. Functionally, catalyzes the biosynthesis and metabolism of eicosanoids. Catalyzes the isomerization of prostaglandin H2 to prostacyclin (= prostaglandin I2), a potent mediator of vasodilation and inhibitor of platelet aggregation. Additionally, displays dehydratase activity, toward hydroperoxyeicosatetraenoates (HPETEs), especially toward (15S)-hydroperoxy-(5Z,8Z,11Z,13E)-eicosatetraenoate (15(S)-HPETE). The polypeptide is Prostacyclin synthase (Ptgis) (Rattus norvegicus (Rat)).